We begin with the raw amino-acid sequence, 144 residues long: Large ribosomal subunit protein uL13 (144 aa).

Belongs to the universal ribosomal protein uL13 family. In terms of assembly, part of the 50S ribosomal subunit.

This protein is one of the early assembly proteins of the 50S ribosomal subunit, although it is not seen to bind rRNA by itself. It is important during the early stages of 50S assembly. The sequence is that of Large ribosomal subunit protein uL13 from Mycoplasmopsis agalactiae (strain NCTC 10123 / CIP 59.7 / PG2) (Mycoplasma agalactiae).